An 81-amino-acid polypeptide reads, in one-letter code: Cytochrome b559 subunit alpha (81 aa).

The helical transmembrane segment at valine 21 to tryptophan 35 threads the bilayer. Residue histidine 23 coordinates heme.

Belongs to the PsbE/PsbF family. In terms of assembly, heterodimer of an alpha subunit and a beta subunit. PSII is composed of 1 copy each of membrane proteins PsbA, PsbB, PsbC, PsbD, PsbE, PsbF, PsbH, PsbI, PsbJ, PsbK, PsbL, PsbM, PsbT, PsbX, PsbY, PsbZ, Psb30/Ycf12, peripheral proteins PsbO, CyanoQ (PsbQ), PsbU, PsbV and a large number of cofactors. It forms dimeric complexes. Requires heme b as cofactor.

It localises to the cellular thylakoid membrane. In terms of biological role, this b-type cytochrome is tightly associated with the reaction center of photosystem II (PSII). PSII is a light-driven water:plastoquinone oxidoreductase that uses light energy to abstract electrons from H(2)O, generating O(2) and a proton gradient subsequently used for ATP formation. It consists of a core antenna complex that captures photons, and an electron transfer chain that converts photonic excitation into a charge separation. This is Cytochrome b559 subunit alpha from Rippkaea orientalis (strain PCC 8801 / RF-1) (Cyanothece sp. (strain PCC 8801)).